The sequence spans 305 residues: Glutaminase (305 aa).

Substrate is bound by residues Ser61, Asn113, Glu158, Asn165, Tyr189, Tyr241, and Val259.

Belongs to the glutaminase family. In terms of assembly, homotetramer.

It carries out the reaction L-glutamine + H2O = L-glutamate + NH4(+). This chain is Glutaminase, found in Clostridium botulinum (strain ATCC 19397 / Type A).